The primary structure comprises 500 residues: Glutamate decarboxylase (500 aa).

Lys277 carries the post-translational modification N6-(pyridoxal phosphate)lysine. The tract at residues 469 to 500 is calmodulin-binding; sequence VHKKTDSEVQLEMITAWKKFVEEKKKKTNRVC.

This sequence belongs to the group II decarboxylase family. Homodimer. Pyridoxal 5'-phosphate serves as cofactor.

It carries out the reaction L-glutamate + H(+) = 4-aminobutanoate + CO2. Functionally, catalyzes the production of GABA. The calmodulin-binding is calcium-dependent and it is proposed that this may, directly or indirectly, form a calcium regulated control of GABA biosynthesis. This Petunia hybrida (Petunia) protein is Glutamate decarboxylase (GAD).